A 156-amino-acid chain; its full sequence is Ribonuclease pancreatic (156 aa).

Residues methionine 1–glycine 28 form the signal peptide. Positions alanine 33 to serine 43 are enriched in basic and acidic residues. Residues alanine 33–threonine 52 are disordered. The substrate site is built by lysine 35 and arginine 38. Catalysis depends on histidine 40, which acts as the Proton acceptor. Intrachain disulfides connect cysteine 54–cysteine 112, cysteine 68–cysteine 123, cysteine 86–cysteine 138, and cysteine 93–cysteine 100. Residue asparagine 62 is glycosylated (N-linked (GlcNAc...) asparagine). Substrate-binding positions include lysine 69–threonine 73, lysine 94, and arginine 113. An N-linked (GlcNAc...) asparagine glycan is attached at asparagine 116. The Proton donor role is filled by histidine 147.

It belongs to the pancreatic ribonuclease family. As to quaternary structure, monomer. Interacts with and forms tight 1:1 complexes with RNH1. Dimerization of two such complexes may occur. Interaction with RNH1 inhibits this protein.

It localises to the secreted. The enzyme catalyses an [RNA] containing cytidine + H2O = an [RNA]-3'-cytidine-3'-phosphate + a 5'-hydroxy-ribonucleotide-3'-[RNA].. It catalyses the reaction an [RNA] containing uridine + H2O = an [RNA]-3'-uridine-3'-phosphate + a 5'-hydroxy-ribonucleotide-3'-[RNA].. Endonuclease that catalyzes the cleavage of RNA on the 3' side of pyrimidine nucleotides. Acts on single-stranded and double-stranded RNA. This is Ribonuclease pancreatic (RNASE1) from Saimiri sciureus (Common squirrel monkey).